Here is a 236-residue protein sequence, read N- to C-terminus: tRNA (guanine-N(1)-)-methyltransferase (236 aa).

Residues G113 and I133 to L138 each bind S-adenosyl-L-methionine.

It belongs to the RNA methyltransferase TrmD family. In terms of assembly, homodimer.

It localises to the cytoplasm. It carries out the reaction guanosine(37) in tRNA + S-adenosyl-L-methionine = N(1)-methylguanosine(37) in tRNA + S-adenosyl-L-homocysteine + H(+). Its function is as follows. Specifically methylates guanosine-37 in various tRNAs. The protein is tRNA (guanine-N(1)-)-methyltransferase of Lachnospira eligens (strain ATCC 27750 / DSM 3376 / VPI C15-48 / C15-B4) (Eubacterium eligens).